The chain runs to 320 residues: 3'-5' exoribonuclease YhaM (320 aa).

A DNA-binding region (OB) is located at residues 18–90; the sequence is FLIKSATKAV…QLKIGSIRPT (73 aa). Positions 163-279 constitute an HD domain; sequence HVVCMLNVAK…LHMIDNIDAK (117 aa).

This sequence belongs to the YhaM family.

Shows a 3'-5' exoribonuclease activity. This is 3'-5' exoribonuclease YhaM from Halalkalibacterium halodurans (strain ATCC BAA-125 / DSM 18197 / FERM 7344 / JCM 9153 / C-125) (Bacillus halodurans).